Consider the following 331-residue polypeptide: Tetraspanin-10 (331 aa).

The interval 1 to 34 (MKEEECSPLLSQDTAGREHPLTRNSPPTANIPCP) is disordered. Over 1-76 (MKEEECSPLL…LSTGSNCVKY (76 aa)) the chain is Cytoplasmic. Residues 77–97 (LIFLSNFLFSLPSLLALAAGL) traverse the membrane as a helical segment. Residues 98–120 (WGLTVKRSQGIGWGGPVPTDPML) lie on the Extracellular side of the membrane. Residues 121–141 (MLVLGGLVVSVVSLSGCLGAF) form a helical membrane-spanning segment. Topologically, residues 142 to 152 (CENSCLLHWYC) are cytoplasmic. Residues 153–173 (GAVLFCLALEALAGVLMVTLW) form a helical membrane-spanning segment. The Extracellular segment spans residues 174–331 (KPLQDSLKYT…AAEDIEAGPL (158 aa)). Disulfide bonds link Cys210-Cys277, Cys211-Cys241, Cys227-Cys235, and Cys242-Cys256. N-linked (GlcNAc...) asparagine glycosylation is present at Asn226.

The protein belongs to the tetraspanin (TM4SF) family. In terms of assembly, interacts with ADAM10.

The protein resides in the cell membrane. Part of TspanC8 subgroup, composed of 6 members that interact with the transmembrane metalloprotease ADAM10. This interaction is required for ADAM10 exit from the endoplasmic reticulum and for enzymatic maturation and trafficking to the cell surface as well as substrate specificity. Different TspanC8/ADAM10 complexes have distinct substrates. The chain is Tetraspanin-10 (Tspan10) from Mus musculus (Mouse).